A 138-amino-acid polypeptide reads, in one-letter code: Fusaristatin A biosynthesis cluster protein FGSG_08206 (138 aa).

The 98-residue stretch at 33–130 folds into the Stress-response A/B barrel domain; the sequence is VHRVTMFKMP…TIDGMMTVFF (98 aa).

The protein operates within secondary metabolite biosynthesis. In terms of biological role, part of the gene cluster that mediates the biosynthesis of the lipopeptide fusaristatin A. Fusaristatin A consists of a polyketide chain linked to three amino acid residues glutamine (Gln), dehydroalanine (dehydro-Ala), and beta-aminoisobutyric acid. The biosynthesis starts with formation of a linear polyketide chain by the highly reducing polyketide synthase PKS6. The gene cluster does not contain an acyl-CoA ligase or an acyl-transferase, and it is therefore predicted that the polyketide is transferred directly to the nonribosomal peptide synthetase NRPS7. Modules 1-3 from NRPS7 incorporate dehydro-Ala, Gln, and beta-aminoisobutyric acid in the compound, which is released by cyclization. The beta-aminoisobutyric acid units are most likely not freely available to the NRPS, but can be synthesized from thymine, which requires a dehydrogenase, a monooxygenase, and an aminotransferase. The fusaristatin A cluster contains a cytochrome P450 monooxygenase (FGSG_08207) and an aminotransferase (FGSG_17085), which theoretically can perform two of the enzymatic steps. The enzymes may however also be involved in biosynthesis of dehydroalanine or modification of the polyketide. The dehydro-Ala residue can be a result of cyclization, where serine is dehydrated. The last gene of the cluster encodes a protein with an A/B barrel domain found in variable enzymes, which hampers functional prediction. This chain is Fusaristatin A biosynthesis cluster protein FGSG_08206, found in Gibberella zeae (strain ATCC MYA-4620 / CBS 123657 / FGSC 9075 / NRRL 31084 / PH-1) (Wheat head blight fungus).